The chain runs to 658 residues: Outer dynein arm-docking complex subunit 1 (658 aa).

3 coiled-coil regions span residues 11-156 (KEVH…RYLN), 186-234 (REEA…KNDE), and 303-380 (NFIN…TDIQ). 2 disordered regions span residues 496-552 (DEEE…SVSH) and 574-658 (GAPV…RGYN). 4 positions are modified to phosphoserine: Ser500, Ser506, Ser507, and Ser509. Composition is skewed to low complexity over residues 506 to 519 (SSPS…QISL), 574 to 583 (GAPVSSRSSQ), 592 to 604 (TSSS…TGYL), and 621 to 639 (SMGS…HASS).

This sequence belongs to the ODA1/DCC2 family. As to quaternary structure, component of the outer dynein arm-docking complex along with ODAD2, ODAD3, ODAD4 and CLXN. Interacts with ODAD3. Interacts with ODAD4; this interaction may facilitate the recruitment and/or attachment of outer dynein arm docking complex proteins including ODAD1, ODAD3, and ODAD4 to ciliary axonemes. Interacts with DNAH9. Interacts with MNS1. Interacts with PIERCE1 and PIERCE2; the interactions link the outer dynein arms docking complex (ODA-DC) to the internal microtubule inner proteins (MIP) in cilium axoneme. In terms of tissue distribution, expressed in motile ciliated tissues.

The protein resides in the cytoplasm. It is found in the cytoskeleton. It localises to the cilium axoneme. Its function is as follows. Component of the outer dynein arm-docking complex that mediates outer dynein arms (ODA) binding onto the doublet microtubule. Involved in mediating assembly of both ODAs and their axonemal docking complex onto ciliary microtubules. This Mus musculus (Mouse) protein is Outer dynein arm-docking complex subunit 1 (Odad1).